A 309-amino-acid chain; its full sequence is tRNA-dihydrouridine(16) synthase (309 aa).

FMN contacts are provided by residues 7 to 9 (PME) and Gln68. Catalysis depends on Cys98, which acts as the Proton donor. FMN contacts are provided by residues Arg137, Asn198, and 220–221 (GC).

The protein belongs to the Dus family. DusC subfamily. FMN serves as cofactor.

The enzyme catalyses 5,6-dihydrouridine(16) in tRNA + NADP(+) = uridine(16) in tRNA + NADPH + H(+). The catalysed reaction is 5,6-dihydrouridine(16) in tRNA + NAD(+) = uridine(16) in tRNA + NADH + H(+). Its function is as follows. Catalyzes the synthesis of 5,6-dihydrouridine (D), a modified base found in the D-loop of most tRNAs, via the reduction of the C5-C6 double bond in target uridines. Specifically modifies U16 in tRNAs. This is tRNA-dihydrouridine(16) synthase from Azotobacter vinelandii.